Consider the following 459-residue polypeptide: ATP synthase subunit beta (459 aa).

Gly148 to Thr155 provides a ligand contact to ATP.

It belongs to the ATPase alpha/beta chains family. As to quaternary structure, F-type ATPases have 2 components, CF(1) - the catalytic core - and CF(0) - the membrane proton channel. CF(1) has five subunits: alpha(3), beta(3), gamma(1), delta(1), epsilon(1). CF(0) has three main subunits: a(1), b(2) and c(9-12). The alpha and beta chains form an alternating ring which encloses part of the gamma chain. CF(1) is attached to CF(0) by a central stalk formed by the gamma and epsilon chains, while a peripheral stalk is formed by the delta and b chains.

Its subcellular location is the cell inner membrane. The catalysed reaction is ATP + H2O + 4 H(+)(in) = ADP + phosphate + 5 H(+)(out). Produces ATP from ADP in the presence of a proton gradient across the membrane. The catalytic sites are hosted primarily by the beta subunits. In Cellvibrio japonicus (strain Ueda107) (Pseudomonas fluorescens subsp. cellulosa), this protein is ATP synthase subunit beta.